Here is a 296-residue protein sequence, read N- to C-terminus: Phosphoribosylaminoimidazole-succinocarboxamide synthase (296 aa).

The protein belongs to the SAICAR synthetase family.

The catalysed reaction is 5-amino-1-(5-phospho-D-ribosyl)imidazole-4-carboxylate + L-aspartate + ATP = (2S)-2-[5-amino-1-(5-phospho-beta-D-ribosyl)imidazole-4-carboxamido]succinate + ADP + phosphate + 2 H(+). The protein operates within purine metabolism; IMP biosynthesis via de novo pathway; 5-amino-1-(5-phospho-D-ribosyl)imidazole-4-carboxamide from 5-amino-1-(5-phospho-D-ribosyl)imidazole-4-carboxylate: step 1/2. This Geotalea uraniireducens (strain Rf4) (Geobacter uraniireducens) protein is Phosphoribosylaminoimidazole-succinocarboxamide synthase.